Consider the following 141-residue polypeptide: Large ribosomal subunit protein uL11 (141 aa).

The protein belongs to the universal ribosomal protein uL11 family. Part of the ribosomal stalk of the 50S ribosomal subunit. Interacts with L10 and the large rRNA to form the base of the stalk. L10 forms an elongated spine to which L12 dimers bind in a sequential fashion forming a multimeric L10(L12)X complex. Post-translationally, one or more lysine residues are methylated.

In terms of biological role, forms part of the ribosomal stalk which helps the ribosome interact with GTP-bound translation factors. The chain is Large ribosomal subunit protein uL11 from Leptospira biflexa serovar Patoc (strain Patoc 1 / Ames).